Consider the following 354-residue polypeptide: MQSPIRHDWSLEEVEALFALPFNDLLFQAQVTHRRNFDPNEVQVSTLLSIKTGACPEDCKYCPQSGHYNTGLEKEKLLEVEKVVNEAKAAKEKGASRFCMGAAWRNPRAKDMPYVLEMVKQVKSLGMETCMTLGMLTADQASELAGAGLDYYNHNLDTSENYYGEIITTRTYSDRLETLQNVRDAGMKVCCGGIMGMGESARDRAALLAQLANLPSHPESVPINMLVKVKGTPLEVQEDIDPFDFIRTIAVARILMPRSHVRLSAGREDMNEQMQAMCFLAGANSIFYGEKLLTTPNPEADKDMMLFKKLGIRPEQREQAHSEDQQEAYLHDVIQAHDQQQRMESMFYDATKTA.

The Radical SAM core domain occupies 40–258; the sequence is NEVQVSTLLS…IAVARILMPR (219 aa). Residues C55, C59, and C62 each coordinate [4Fe-4S] cluster. Residues C99, C130, C190, and R262 each contribute to the [2Fe-2S] cluster site.

This sequence belongs to the radical SAM superfamily. Biotin synthase family. In terms of assembly, homodimer. [4Fe-4S] cluster serves as cofactor. It depends on [2Fe-2S] cluster as a cofactor.

It carries out the reaction (4R,5S)-dethiobiotin + (sulfur carrier)-SH + 2 reduced [2Fe-2S]-[ferredoxin] + 2 S-adenosyl-L-methionine = (sulfur carrier)-H + biotin + 2 5'-deoxyadenosine + 2 L-methionine + 2 oxidized [2Fe-2S]-[ferredoxin]. The protein operates within cofactor biosynthesis; biotin biosynthesis; biotin from 7,8-diaminononanoate: step 2/2. In terms of biological role, catalyzes the conversion of dethiobiotin (DTB) to biotin by the insertion of a sulfur atom into dethiobiotin via a radical-based mechanism. The chain is Biotin synthase from Hahella chejuensis (strain KCTC 2396).